We begin with the raw amino-acid sequence, 441 residues long: Vacuolar cation/proton exchanger 2 (441 aa).

The Cytoplasmic segment spans residues 1–69 (MSCCKVPVLI…PKNSVLNSIK (69 aa)). A helical transmembrane segment spans residues 70–90 (IVIFCNKLNLLLPFGPLAILV). Residues 91–97 (HYMIDSK) are Extracellular-facing. The chain crosses the membrane as a helical span at residues 98 to 118 (GWVFLLTLVGITPLAERLGYA). Residues 119 to 129 (TEQLACYTGPT) lie on the Cytoplasmic side of the membrane. A helical transmembrane segment spans residues 130–150 (VGGLLNATFGNVTELIISIFA). Residues 139–174 (GNVTELIISIFALKNGMIRVVQLTLLGSILSNMLLV) form a cation selection region. The Extracellular portion of the chain corresponds to 151-166 (LKNGMIRVVQLTLLGS). The chain crosses the membrane as a helical span at residues 167–187 (ILSNMLLVLGCAFFCGGLVFY). The Cytoplasmic segment spans residues 188–196 (QKDQVFDKG). The chain crosses the membrane as a helical span at residues 197–217 (IATVNSGLLLMAVMGILFPAV). At 218-231 (LHYTHSEVHAGSSE) the chain is on the extracellular side. The chain crosses the membrane as a helical span at residues 232-252 (LALSRFSSCIMLIAYAAYLFF). Topologically, residues 253 to 286 (QLKSQSNSYSPLDEESNQNEETSAEDEDPEISKW) are cytoplasmic. A helical transmembrane segment spans residues 287 to 307 (EAIIWLSILTAWVSLLSGYLV). Residues 308 to 311 (DAIE) lie on the Extracellular side of the membrane. A helical membrane pass occupies residues 312 to 332 (GASVSWNIPIAFISTILLPIV). At 333-354 (GNAAEHAGAIMFAMKDKLDLSL) the chain is on the cytoplasmic side. A cation selection region spans residues 333–368 (GNAAEHAGAIMFAMKDKLDLSLGVAIGSSIQISMFA). A helical transmembrane segment spans residues 355–375 (GVAIGSSIQISMFAVPFCVVI). Residues 376-384 (GWMMGQQMD) lie on the Extracellular side of the membrane. A helical membrane pass occupies residues 385–405 (LNFQLFETAMLFITVIVVAFF). The Cytoplasmic portion of the chain corresponds to 406–412 (LQEGSSN). The helical transmembrane segment at 413-433 (YFKGLMLILCYLIVAASFFVH) threads the bilayer. Topologically, residues 434–441 (EDPHQDGI) are extracellular.

It belongs to the Ca(2+):cation antiporter (CaCA) (TC 2.A.19) family. Cation/proton exchanger (CAX) subfamily.

It localises to the vacuole membrane. Inhibited by excess of Ca(2+) and Cd(2+), Mn(2+), and Zn(2+). Functionally, vacuolar cation/proton exchanger (CAX). Translocates Ca(2+) and other metal ions into vacuoles using the proton gradient formed by H(+)-ATPase and H(+)-pyrophosphatase. The sequence is that of Vacuolar cation/proton exchanger 2 (CAX2) from Arabidopsis thaliana (Mouse-ear cress).